The chain runs to 758 residues: 52 kDa repressor of the inhibitor of the protein kinase (758 aa).

Residues 1 to 86 (MPNFCAAPNC…LRDNAIPTIF (86 aa)) form a THAP-type zinc finger. Residues 116–141 (QKKIEETSEQEQETNTNAQNPSAEAV) are disordered. Ser563 is subject to Phosphoserine.

In terms of assembly, interacts with DNAJC3, probably sequestring it.

In terms of biological role, upstream regulator of interferon-induced serine/threonine protein kinase R (PKR). May block the PKR-inhibitory function of DNAJC3, resulting in restoration of kinase activity and suppression of cell growth. The chain is 52 kDa repressor of the inhibitor of the protein kinase from Mus musculus (Mouse).